Reading from the N-terminus, the 549-residue chain is Plant intracellular Ras-group-related LRR protein 4 (549 aa).

Low complexity predominate over residues serine 119–alanine 140. The segment at serine 119–serine 167 is disordered. Residues arginine 141–phenylalanine 150 show a composition bias toward polar residues. Residues alanine 154–serine 167 are compositionally biased toward basic and acidic residues. Position 167 is a phosphoserine (serine 167). LRR repeat units lie at residues leucine 245–leucine 268, serine 269–leucine 291, asparagine 293–arginine 313, leucine 314–leucine 337, serine 339–cysteine 360, serine 362–isoleucine 383, threonine 384–leucine 406, alanine 407–threonine 430, leucine 432–leucine 454, glutamate 455–methionine 476, and threonine 478–lysine 500. Residues glycine 501–tyrosine 508 carry the GVYW; degenerate motif.

Belongs to the SHOC2 family. As to expression, widely expressed.

Its function is as follows. Leucine-rich repeat protein that likely mediates protein interactions, possibly in the context of signal transduction. This is Plant intracellular Ras-group-related LRR protein 4 (PIRL4) from Arabidopsis thaliana (Mouse-ear cress).